Reading from the N-terminus, the 343-residue chain is Sulfate/thiosulfate import ATP-binding protein CysA (343 aa).

An ABC transporter domain is found at 3 to 233 (ILIENISKTF…PATPFVMGFM (231 aa)). 35-42 (GPSGSGKS) is an ATP binding site.

This sequence belongs to the ABC transporter superfamily. Sulfate/tungstate importer (TC 3.A.1.6) family.

The protein localises to the plastid. It is found in the chloroplast. It catalyses the reaction sulfate(out) + ATP + H2O = sulfate(in) + ADP + phosphate + H(+). It carries out the reaction thiosulfate(out) + ATP + H2O = thiosulfate(in) + ADP + phosphate + H(+). Functionally, part of the ABC transporter complex involved in sulfate/thiosulfate import. Responsible for energy coupling to the transport system. The protein is Sulfate/thiosulfate import ATP-binding protein CysA of Nephroselmis olivacea (Green alga).